The primary structure comprises 881 residues: Phosphoenolpyruvate carboxylase (881 aa).

Catalysis depends on residues histidine 139 and lysine 544.

The protein belongs to the PEPCase type 1 family. Mg(2+) serves as cofactor.

The enzyme catalyses oxaloacetate + phosphate = phosphoenolpyruvate + hydrogencarbonate. Its function is as follows. Forms oxaloacetate, a four-carbon dicarboxylic acid source for the tricarboxylic acid cycle. The sequence is that of Phosphoenolpyruvate carboxylase from Marinobacter nauticus (strain ATCC 700491 / DSM 11845 / VT8) (Marinobacter aquaeolei).